Reading from the N-terminus, the 422-residue chain is Aspartate--tRNA(Asp/Asn) ligase (422 aa).

Glu-158 contributes to the L-aspartate binding site. Residues 180–183 (QLYK) form an aspartate region. An L-aspartate-binding site is contributed by Arg-201. Residues 201–203 (RME), 209–211 (RHL), and Glu-345 contribute to the ATP site. Residues Ser-348 and Arg-352 each coordinate L-aspartate. Position 393-396 (393-396 (GAER)) interacts with ATP.

The protein belongs to the class-II aminoacyl-tRNA synthetase family. Type 2 subfamily. Homodimer. Makes part of a ribonucleoprotein particle (RNP) called transamidosome that allows channelling of the aa-tRNA from non-discriminating aspartyl-tRNA synthetase active site to the GatCAB amidotransferase site. The transamidosome complex is formed by two GatCABs, one dimeric ND-AspRSs and two tRNAs(Asn) molecules.

The protein resides in the cytoplasm. It carries out the reaction tRNA(Asx) + L-aspartate + ATP = L-aspartyl-tRNA(Asx) + AMP + diphosphate. Aspartyl-tRNA synthetase with relaxed tRNA specificity since it is able to aspartylate not only its cognate tRNA(Asp) but also tRNA(Asn) with similar efficiencies. Reaction proceeds in two steps: L-aspartate is first activated by ATP to form Asp-AMP and then transferred to the acceptor end of tRNA(Asp/Asn). This Thermus thermophilus (strain ATCC 27634 / DSM 579 / HB8) protein is Aspartate--tRNA(Asp/Asn) ligase (aspS2).